The following is a 305-amino-acid chain: MAREDSVKCLRCLLYALNLLFWLMSISVLAVSAWMRDYLNNVLTLTAETRVEEAVILTYFPVVHPVMIAVCCFLIIVGMLGYCGTVKRNLLLLAWYFGTLLVIFCVELACGVWTYEQEVMVPVQWSDMVTLKARMTNYGLPRYRWLTHAWNYFQREFKCCGVVYFTDWLEMTEMDWPPDSCCVREFPGCSKQAHQEDLSDLYQEGCGKKMYSFLRGTKQLQVLRFLGISIGVTQILAMILTITLLWALYYDRREPGTDQMLSLKNDASQHLSCHSVELLKPSLSRIFEHTSMANSFNTHFEMEEL.

Over 1 to 12 (MAREDSVKCLRC) the chain is Cytoplasmic. 2 S-palmitoyl cysteine lipidation sites follow: Cys9 and Cys12. Residues 13-33 (LLYALNLLFWLMSISVLAVSA) form a helical membrane-spanning segment. Residues 34 to 59 (WMRDYLNNVLTLTAETRVEEAVILTY) lie on the Extracellular side of the membrane. The helical transmembrane segment at 60 to 80 (FPVVHPVMIAVCCFLIIVGML) threads the bilayer. Cys83 carries S-palmitoyl cysteine lipidation. Residues 90-110 (LLLLAWYFGTLLVIFCVELAC) form a helical membrane-spanning segment. Topologically, residues 111-224 (GVWTYEQEVM…RGTKQLQVLR (114 aa)) are extracellular. Residues 225–245 (FLGISIGVTQILAMILTITLL) traverse the membrane as a helical segment. Topologically, residues 246-305 (WALYYDRREPGTDQMLSLKNDASQHLSCHSVELLKPSLSRIFEHTSMANSFNTHFEMEEL) are cytoplasmic.

The protein belongs to the tetraspanin (TM4SF) family. As to quaternary structure, component of a complex, at least composed of TSPAN12, FZD4 and norrin (NDP). Interacts (when palmitoylated) with ADAM10. Interacts with MMP14/MT1-MMP. Palmitoylated; required for interaction with ADAM10. The precise position of palmitoylated residues is unclear and occurs either on Cys-9, Cys-12 and/or Cys-83.

It localises to the cell membrane. Regulator of cell surface receptor signal transduction. Plays a central role in retinal vascularization by regulating norrin (NDP) signal transduction. Acts in concert with norrin (NDP) to promote FZD4 multimerization and subsequent activation of FZD4, leading to promote accumulation of beta-catenin (CTNNB1) and stimulate LEF/TCF-mediated transcriptional programs. Suprisingly, it only activates the norrin (NDP)-dependent activation of FZD4, while it does not activate the Wnt-dependent activation of FZD4, suggesting the existence of a Wnt-independent signaling that also promote accumulation the beta-catenin (CTNNB1). Acts as a regulator of membrane proteinases such as ADAM10 and MMP14/MT1-MMP. Activates ADAM10-dependent cleavage activity of amyloid precursor protein (APP). Activates MMP14/MT1-MMP-dependent cleavage activity. This is Tetraspanin-12 (Tspan12) from Rattus norvegicus (Rat).